The sequence spans 167 residues: MSEEESPYQLTKTFSNPKNNKIGLAIFLIGAFINLIHIYKPKGPSNNPTKRNYHISFGPPGKIRWFPLGIRKEVRSNVSGREIIIKMIITFILVQTTLITLDLYVFGATGLGLILSWKLFEVACANPEDEALLAERKQRLKEQREKKEQKKEQKKEKKTERRKKKKL.

A run of 2 helical transmembrane segments spans residues 21-41 and 87-107; these read KIGL…IYKP and MIIT…YVFG. Positions 136–159 are enriched in basic and acidic residues; it reads RKQRLKEQREKKEQKKEQKKEKKT. Residues 136–167 are disordered; sequence RKQRLKEQREKKEQKKEQKKEKKTERRKKKKL.

It localises to the membrane. This is an uncharacterized protein from Schizosaccharomyces pombe (strain 972 / ATCC 24843) (Fission yeast).